Here is a 1035-residue protein sequence, read N- to C-terminus: Retinoblastoma-related protein (1035 aa).

The interval 403–426 (ITSPLSPHRSPASHANGIPGSANS) is disordered. The segment at 431–632 (TPVSTAMTTA…EKGSSLYNSL (202 aa)) is domain A. Residues 431–885 (TPVSTAMTTA…NEIFIPAAKP (455 aa)) are pocket. The segment at 633–753 (TVARPALSAE…PGGGGETCAE (121 aa)) is spacer. 2 disordered regions span residues 674-697 (PSLQ…PKRP) and 721-748 (GNLK…GGGG). A domain B region spans residues 754–885 (TGINVFFTKI…NEIFIPAAKP (132 aa)).

The protein belongs to the retinoblastoma protein (RB) family.

The protein localises to the nucleus. Its function is as follows. Regulator of biological processes that recruits a histone deacetylase to control gene transcription. May play a role in the entry into mitosis, negatively regulating the cell proliferation. Formation of stable complexes with geminiviridae replication-associated proteins may create a cellular environment which favors viral DNA replication. The sequence is that of Retinoblastoma-related protein (RBL901) from Populus trichocarpa (Western balsam poplar).